Consider the following 579-residue polypeptide: Folliculin (579 aa).

Residues 32–82 form a disordered region; the sequence is GAGSGDSPGQVEQAEEEEGGIQMSSRVRAHSPAEGASTDSSSPGPKKSDMC. 2 positions are modified to phosphoserine: Ser-62 and Ser-73. In terms of domain architecture, uDENN FLCN/SMCR8-type spans 86–242; the sequence is RSLAVGHPGY…RNGNAARSLT (157 aa). Residues 287-310 adopt a coiled-coil conformation; it reads EKLADLEEESESWDNSEAEEEEKA. The segment covering 294-308 has biased composition (acidic residues); sequence EESESWDNSEAEEEE. A disordered region spans residues 294-320; sequence EESESWDNSEAEEEEKAPATAEGAEGR. Phosphoserine is present on residues Ser-302, Ser-406, Ser-537, Ser-542, and Ser-571. Residues 339–491 form the cDENN FLCN/SMCR8-type domain; it reads QPPKLSVFKS…ILNKMEAALT (153 aa). The dDENN FLCN/SMCR8-type domain maps to 493-558; the sequence is QNLSVDVVDQ…LLKFWMTGLS (66 aa).

Belongs to the folliculin family. As to quaternary structure, interacts (via C-terminus) with FNIP1 or FNIP2 (via C-terminus). Component of the lysosomal folliculin complex (LFC), composed of FLCN, FNIP1 (or FNIP2), RagA/RRAGA or RagB/RRAGB GDP-bound, RagC/RRAGC or RagD/RRAGD GTP-bound, and Ragulator. Interaction with FNIP1 or FNIP2 mediates indirect interaction with the PRKAA1, PRKAB1 and PRKAG1 subunits of 5'-AMP-activated protein kinase (AMPK). Interacts with HSP90AA1 in the presence of FNIP1. Interacts with HSP70, STUB1, CDC37, AHSA1, CCT2, STIP1, PTGES3 and PPP5C. Interacts with GABARAP; interaction takes place in the presence of FNIP1 and/or FNIP2. Interacts with RILP; the interaction is direct and promotes association between RILP and RAB34. Interacts with KIF3A and KIF3B. Interacts with lactate dehydrogenase LDHA, but not LDHB; the interaction is direct, may preferentially bind LDHA dimers rather than tetramers, and regulates LDHA activity, acting as an uncompetitive inhibitor. Phosphorylation by ULK1 modulates the interaction with GABARAP and is required to regulate autophagy. In terms of tissue distribution, expressed in kidney.

The protein localises to the lysosome membrane. The protein resides in the cytoplasm. It is found in the cytosol. Its subcellular location is the cell projection. It localises to the cilium. The protein localises to the cytoskeleton. The protein resides in the microtubule organizing center. It is found in the centrosome. Its subcellular location is the spindle. It localises to the nucleus. With respect to regulation, GTPase-activating activity is inhibited in the folliculin complex (LFC), which stabilizes the GDP-bound state of RagA/RRAGA (or RagB/RRAGB), because Arg-164 is located far from the RagC/RRAGC or RagD/RRAGD nucleotide pocket. Disassembly of the LFC complex upon amino acid restimulation liberates the GTPase-activating activity. In terms of biological role, multi-functional protein, involved in both the cellular response to amino acid availability and in the regulation of glycolysis. GTPase-activating protein that plays a key role in the cellular response to amino acid availability through regulation of the non-canonical mTORC1 signaling cascade controlling the MiT/TFE factors TFEB and TFE3. Activates mTORC1 by acting as a GTPase-activating protein: specifically stimulates GTP hydrolysis by RagC/RRAGC or RagD/RRAGD, promoting the conversion to the GDP-bound state of RagC/RRAGC or RagD/RRAGD, and thereby activating the kinase activity of mTORC1. The GTPase-activating activity is inhibited during starvation and activated in presence of nutrients. Acts as a key component for non-canonical mTORC1-dependent control of the MiT/TFE factors TFEB and TFE3, while it is not involved in mTORC1-dependent phosphorylation of canonical RPS6KB1/S6K1 and EIF4EBP1/4E-BP1. In low-amino acid conditions, the lysosomal folliculin complex (LFC) is formed on the membrane of lysosomes, which inhibits the GTPase-activating activity of FLCN, inactivates mTORC1 and maximizes nuclear translocation of TFEB and TFE3. Upon amino acid restimulation, RagA/RRAGA (or RagB/RRAGB) nucleotide exchange promotes disassembly of the LFC complex and liberates the GTPase-activating activity of FLCN, leading to activation of mTORC1 and subsequent cytoplasmic retention of TFEB and TFE3. Indirectly acts as a positive regulator of Wnt signaling by promoting mTOR-dependent cytoplasmic retention of MiT/TFE factor TFE3. Required for the exit of hematopoietic stem cell from pluripotency by promoting mTOR-dependent cytoplasmic retention of TFE3, thereby increasing Wnt signaling. Involved in the control of embryonic stem cells differentiation; together with LAMTOR1 it is necessary to recruit and activate RagC/RRAGC and RagD/RRAGD at the lysosomes, and to induce exit of embryonic stem cells from pluripotency via non-canonical, mTOR-independent TFE3 inactivation. Acts as an inhibitor of browning of adipose tissue by regulating mTOR-dependent cytoplasmic retention of TFE3. In response to flow stress, regulates STK11/LKB1 accumulation and mTORC1 activation through primary cilia: may act by recruiting STK11/LKB1 to primary cilia for activation of AMPK resided at basal bodies, causing mTORC1 down-regulation. Together with FNIP1 and/or FNIP2, regulates autophagy: following phosphorylation by ULK1, interacts with GABARAP and promotes autophagy. Required for starvation-induced perinuclear clustering of lysosomes by promoting association of RILP with its effector RAB34. Regulates glycolysis by binding to lactate dehydrogenase LDHA, acting as an uncompetitive inhibitor. In Rattus norvegicus (Rat), this protein is Folliculin.